The primary structure comprises 451 residues: Glycosyltransferase-like At2g41451 (451 aa).

A signal peptide spans 1-23; sequence MASSDSSYSRKFLLITFLPLSLA. N-linked (GlcNAc...) asparagine glycosylation is found at Asn36, Asn137, Asn168, Asn441, and Asn444. A GT92 domain is found at 109 to 345; it reads QTLPWIFYHK…TYSKFSDLTS (237 aa).

Belongs to the glycosyltransferase 92 family.

The protein localises to the secreted. It localises to the cell wall. The protein resides in the cytoplasm. Its subcellular location is the cell membrane. In terms of biological role, involved in the coordination between cell elongation and cellulose synthesis by promoting the expression of genes involved in cell elongation and cellulose synthesis. Acts as a regulator of plasmodesmatal permeability. Maybe a glycosyltransferase. In Arabidopsis thaliana (Mouse-ear cress), this protein is Glycosyltransferase-like At2g41451.